A 351-amino-acid chain; its full sequence is Neutral protease 2 homolog MGG_10927 (351 aa).

Residues 1-16 (MKFSIGVSLLATLAGA) form the signal peptide. Positions 17-177 (VNVDMAKRDT…AAFLAKRTIV (161 aa)) are excised as a propeptide. 2 cysteine pairs are disulfide-bonded: cysteine 181/cysteine 253 and cysteine 260/cysteine 278. Histidine 303 lines the Zn(2+) pocket. Residue glutamate 304 is part of the active site. Histidine 307 provides a ligand contact to Zn(2+).

It belongs to the peptidase M35 family. Requires Zn(2+) as cofactor.

The protein localises to the secreted. It carries out the reaction Preferential cleavage of bonds with hydrophobic residues in P1'. Also 3-Asn-|-Gln-4 and 8-Gly-|-Ser-9 bonds in insulin B chain.. Its function is as follows. Secreted metalloproteinase that allows assimilation of proteinaceous substrates. Shows high activities on basic nuclear substrates such as histone and protamine. In Colletotrichum graminicola (strain M1.001 / M2 / FGSC 10212) (Maize anthracnose fungus), this protein is Neutral protease 2 homolog MGG_10927.